A 542-amino-acid chain; its full sequence is Bifunctional pantoate ligase/cytidylate kinase (542 aa).

The pantoate--beta-alanine ligase stretch occupies residues 1 to 280; sequence MHWLRTVAAL…VGQTRLIDNL (280 aa). An ATP-binding site is contributed by 28–35; the sequence is MGSLHEGH. His-35 acts as the Proton donor in catalysis. Gln-59 is a binding site for (R)-pantoate. Gln-59 serves as a coordination point for beta-alanine. 150-153 is an ATP binding site; the sequence is GQKD. Gln-156 is a (R)-pantoate binding site. ATP-binding positions include Val-179 and 187–190; that span reads CSSR. Residues 281–542 form a cytidylate kinase region; sequence LLSPEQGDPL…ERSGPARLDQ (262 aa). The disordered stretch occupies residues 287-311; sequence GDPLPERVQHAAPPSSGTTSPPRRP.

In the N-terminal section; belongs to the pantothenate synthetase family. The protein in the C-terminal section; belongs to the cytidylate kinase family. Type 1 subfamily.

Its subcellular location is the cytoplasm. The catalysed reaction is (R)-pantoate + beta-alanine + ATP = (R)-pantothenate + AMP + diphosphate + H(+). It catalyses the reaction CMP + ATP = CDP + ADP. The enzyme catalyses dCMP + ATP = dCDP + ADP. The protein operates within cofactor biosynthesis; (R)-pantothenate biosynthesis; (R)-pantothenate from (R)-pantoate and beta-alanine: step 1/1. Functionally, catalyzes the condensation of pantoate with beta-alanine in an ATP-dependent reaction via a pantoyl-adenylate intermediate. Catalyzes the transfer of a phosphate group from ATP to either CMP or dCMP to form CDP or dCDP and ADP, respectively. The chain is Bifunctional pantoate ligase/cytidylate kinase from Synechococcus sp. (strain JA-2-3B'a(2-13)) (Cyanobacteria bacterium Yellowstone B-Prime).